We begin with the raw amino-acid sequence, 172 residues long: Peptide deformylase (172 aa).

Residues C92 and H134 each contribute to the Fe cation site. E135 is an active-site residue. H138 contacts Fe cation.

The protein belongs to the polypeptide deformylase family. Fe(2+) is required as a cofactor.

It catalyses the reaction N-terminal N-formyl-L-methionyl-[peptide] + H2O = N-terminal L-methionyl-[peptide] + formate. Removes the formyl group from the N-terminal Met of newly synthesized proteins. Requires at least a dipeptide for an efficient rate of reaction. N-terminal L-methionine is a prerequisite for activity but the enzyme has broad specificity at other positions. This chain is Peptide deformylase, found in Saccharophagus degradans (strain 2-40 / ATCC 43961 / DSM 17024).